Consider the following 283-residue polypeptide: Shikimate dehydrogenase (NADP(+)) (283 aa).

Shikimate contacts are provided by residues 16–18 (SLS) and Thr63. Residue Lys67 is the Proton acceptor of the active site. Asp79 lines the NADP(+) pocket. The shikimate site is built by Asn88 and Asp103. NADP(+)-binding positions include 128-132 (GAGGA), Ala223, and Gly243.

The protein belongs to the shikimate dehydrogenase family. As to quaternary structure, homodimer.

The catalysed reaction is shikimate + NADP(+) = 3-dehydroshikimate + NADPH + H(+). The protein operates within metabolic intermediate biosynthesis; chorismate biosynthesis; chorismate from D-erythrose 4-phosphate and phosphoenolpyruvate: step 4/7. Functionally, involved in the biosynthesis of the chorismate, which leads to the biosynthesis of aromatic amino acids. Catalyzes the reversible NADPH linked reduction of 3-dehydroshikimate (DHSA) to yield shikimate (SA). This is Shikimate dehydrogenase (NADP(+)) from Xanthomonas oryzae pv. oryzae (strain MAFF 311018).